The sequence spans 243 residues: uncharacterized protein (243 aa).

Positions 1 to 18 (MSNSHYNNYQQQQPHSSN) are enriched in low complexity. Residues 1–30 (MSNSHYNNYQQQQPHSSNGDPEYQHQQMVH) form a disordered region. The AMMECR1 domain occupies 38 to 232 (GHGMKTVAVP…MHYKEYREYQ (195 aa)).

This is an uncharacterized protein from Drosophila melanogaster (Fruit fly).